A 962-amino-acid polypeptide reads, in one-letter code: Cohesin subunit psc3 (962 aa).

Residues 1-72 (MSESVTTGSD…GVNVKRSRRN (72 aa)) are disordered. A compositionally biased stretch (polar residues) spans 21–30 (VMLSQSFDPM). A compositionally biased stretch (basic residues) spans 51–71 (SSKKRHPRPNSKGVNVKRSRR). A coiled-coil region spans residues 236–275 (LCEKSKELLNEHAIATKQLEKEEKRSRVNRNRINELNNSL). Residues 297–382 (FVHRYRDVEP…SRFKERILEM (86 aa)) form the SCD domain.

It belongs to the SCC3 family. Cohesin complexes are composed of the psm1/smc1 and psm3/smc3 heterodimer attached via their hinge domain, rad21/scc1 which link them, and psc3/scc3, which interacts with rad21. Interacts with swi6. The interaction with swi6 may contribute to recruit cohesin complex to heterochromatin.

Its subcellular location is the nucleus. It is found in the chromosome. The protein localises to the centromere. In terms of biological role, component of cohesin complex, a complex required for the cohesion of sister chromatids after DNA replication. The cohesin complex apparently forms a large proteinaceous ring within which sister chromatids can be trapped. At anaphase, the rad21 subunit of the cohesin complex is cleaved and dissociates from chromatin, allowing sister chromatids to segregate. The cohesin complex may also play a role in spindle pole assembly during mitosis. In Schizosaccharomyces pombe (strain 972 / ATCC 24843) (Fission yeast), this protein is Cohesin subunit psc3 (psc3).